A 1449-amino-acid chain; its full sequence is Spike glycoprotein (1449 aa).

Residues 1–28 (MKKLFVVLVVMPLIYGDNFPCSKLTNRT) form the signal peptide. 2 S1 regions span residues 17–776 (DNFP…FYYY) and 29–776 (IGNH…FYYY). Residues 29 to 1390 (IGNHWNLIET…NRIETYVKWP (1362 aa)) are Virion surface-facing. Residues 657-801 (VIYEEGDNIV…DSNDVDCEPV (145 aa)) form an interaction with host ANPEP region. An S2 region spans residues 777-1449 (SIYNYTNDMT…YEPIEKVHIH (673 aa)). A fusion peptide region spans residues 1022 to 1043 (AGGITLGALGGGAVAIPFAVAV). The interval 1037-1156 (IPFAVAVQAR…HVDRLITGRL (120 aa)) is heptad repeat 1 (HR1). Coiled coils occupy residues 1104 to 1148 (QDVV…DAHV) and 1338 to 1380 (TYLN…LEWL). The segment at 1305 to 1402 (PDYIDINQTV…VWLLIGLVVI (98 aa)) is heptad repeat 2 (HR2). The helical transmembrane segment at 1391–1410 (WYVWLLIGLVVIFCIPLLLF) threads the bilayer. Topologically, residues 1411-1449 (CCCSTGCCGCIGCLGSCCHSICSRRQFENYEPIEKVHIH) are intravirion. Positions 1445–1449 (KVHIH) match the KxHxx motif.

The protein belongs to the alphacoronaviruses spike protein family. In terms of assembly, homotrimer. During virus morphogenesis, found in a complex with M and HE proteins. Interacts with host ANPEP.

The protein localises to the virion membrane. It is found in the host endoplasmic reticulum-Golgi intermediate compartment membrane. S1 region attaches the virion to the cell membrane by interacting with host ANPEP/aminopeptidase N, initiating the infection. Binding to the receptor probably induces conformational changes in the S glycoprotein unmasking the fusion peptide of S2 region and activating membranes fusion. S2 region belongs to the class I viral fusion protein. Under the current model, the protein has at least 3 conformational states: pre-fusion native state, pre-hairpin intermediate state, and post-fusion hairpin state. During viral and target cell membrane fusion, the coiled coil regions (heptad repeats) regions assume a trimer-of-hairpins structure, positioning the fusion peptide in close proximity to the C-terminal region of the ectodomain. The formation of this structure appears to drive apposition and subsequent fusion of viral and target cell membranes. The protein is Spike glycoprotein of Porcine transmissible gastroenteritis coronavirus (strain FS772/70) (TGEV).